The following is a 195-amino-acid chain: MANILVLKSSILGQYSQSNALIDGFLADHQSDTVTVRDLATLNLPVLDGELASGLRGGDNLNERQLAVMAQSDELIAELKGSDLVVIAAPMYNFSIPTQLKNWIDLIARAGVTFRYTETGPVGLVENTRALVISPRGGMHVGSATDLVTPYMRTVLGFIGIKDVDFIYAEGMGMGPDAQAKGIEQAKGQLETLAL.

FMN contacts are provided by residues Ser-10, 16 to 18, and 91 to 94; these read SQS and MYNF.

This sequence belongs to the azoreductase type 1 family. As to quaternary structure, homodimer. Requires FMN as cofactor.

The catalysed reaction is 2 a quinone + NADH + H(+) = 2 a 1,4-benzosemiquinone + NAD(+). It carries out the reaction N,N-dimethyl-1,4-phenylenediamine + anthranilate + 2 NAD(+) = 2-(4-dimethylaminophenyl)diazenylbenzoate + 2 NADH + 2 H(+). Its function is as follows. Quinone reductase that provides resistance to thiol-specific stress caused by electrophilic quinones. In terms of biological role, also exhibits azoreductase activity. Catalyzes the reductive cleavage of the azo bond in aromatic azo compounds to the corresponding amines. This chain is FMN-dependent NADH:quinone oxidoreductase, found in Aeromonas salmonicida (strain A449).